Here is a 562-residue protein sequence, read N- to C-terminus: Potassium-transporting ATPase potassium-binding subunit (562 aa).

12 consecutive transmembrane segments (helical) span residues 6-26 (FLLI…LGGF), 62-82 (YALA…VLLM), 132-152 (GLTV…FALI), 175-195 (LYVL…QGVL), 253-273 (FVQM…FGQV), 283-303 (LIWA…YAEL), 327-347 (FGIL…CGAV), 356-376 (ALGG…FGGV), 379-399 (GLYG…LMIG), 416-436 (MTAL…ALAL), 483-503 (LLLA…VLAI), and 526-546 (LFIG…FIPA).

It belongs to the KdpA family. The system is composed of three essential subunits: KdpA, KdpB and KdpC.

It localises to the cell inner membrane. In terms of biological role, part of the high-affinity ATP-driven potassium transport (or Kdp) system, which catalyzes the hydrolysis of ATP coupled with the electrogenic transport of potassium into the cytoplasm. This subunit binds the periplasmic potassium ions and delivers the ions to the membrane domain of KdpB through an intramembrane tunnel. This is Potassium-transporting ATPase potassium-binding subunit from Yersinia pseudotuberculosis serotype I (strain IP32953).